A 246-amino-acid polypeptide reads, in one-letter code: tRNA (guanine-N(1)-)-methyltransferase (246 aa).

S-adenosyl-L-methionine-binding positions include G114 and 134–139 (IGDYIL).

The protein belongs to the RNA methyltransferase TrmD family. As to quaternary structure, homodimer.

It localises to the cytoplasm. It carries out the reaction guanosine(37) in tRNA + S-adenosyl-L-methionine = N(1)-methylguanosine(37) in tRNA + S-adenosyl-L-homocysteine + H(+). Functionally, specifically methylates guanosine-37 in various tRNAs. The polypeptide is tRNA (guanine-N(1)-)-methyltransferase (Coxiella burnetii (strain CbuK_Q154) (Coxiella burnetii (strain Q154))).